The following is a 92-amino-acid chain: Dynein light chain 1, cytoplasmic (92 aa).

It belongs to the dynein light chain family. As to quaternary structure, homodimer. Cytoplasmic dynein consists of two catalytic heavy chains (HCs) and a number of non-catalytic subunits which present intermediate chains (ICs), light intermediate chains (LICs) and light chains (LCs). Component of the nuclear pore complex (NPC). NPC constitutes the exclusive means of nucleocytoplasmic transport. NPCs allow the passive diffusion of ions and small molecules and the active, nuclear transport receptor-mediated bidirectional transport of macromolecules such as proteins, RNAs, ribonucleoparticles (RNPs), and ribosomal subunits across the nuclear envelope. Due to its 8-fold rotational symmetry, all subunits are present with 8 copies or multiples thereof. Part of the NUP82 subcomplex. In the complex, interacts directly with Nup159.

The protein localises to the cytoplasm. It is found in the cytoskeleton. It localises to the nucleus. Its subcellular location is the nuclear pore complex. Its function is as follows. Acts as one of several non-catalytic accessory components of the cytoplasmic dynein complex that are thought to be involved in linking dynein to cargos and to adapter proteins that regulate dynein function. Cytoplasmic dynein 1 acts as a motor for the intracellular retrograde motility of vesicles and organelles along microtubules. May play a role in changing or maintaining the spatial distribution of cytoskeletal structures. Also a component of the nuclear pore complex where it may contribute to the stable association of the Nup82 subcomplex with the NPC. This Saccharomyces cerevisiae (strain ATCC 204508 / S288c) (Baker's yeast) protein is Dynein light chain 1, cytoplasmic (DYN2).